The following is a 473-amino-acid chain: Vasculin-like protein 1 (473 aa).

Polar residues predominate over residues 14-25; the sequence is STPQSSKSSTAT. Positions 14-55 are disordered; that stretch reads STPQSSKSSTATFDKHGEHLSRGEGRFGISRRRHNSSDGFFN. The span at 26 to 38 shows a compositional bias: basic and acidic residues; the sequence is FDKHGEHLSRGEG. Phosphoserine is present on residues serine 49 and serine 76. Disordered stretches follow at residues 88-127 and 155-189; these read GTTGWHGSSRGHDGMSQRSGGSSTGNHRHWNGSFHSRKGC and DFPSLNPEAGKQNQPCRPVGTPSGVWENPPSAKQP. Residues 103-112 are compositionally biased toward polar residues; the sequence is SQRSGGSSTG. Basic residues predominate over residues 113-125; sequence NHRHWNGSFHSRK. A Phosphoserine modification is found at serine 199. 2 disordered regions span residues 235–267 and 281–316; these read LVPKPAPPPSKPNAWKANRTEHKPGSLCSSRES and LAAGAGLHSPKESPSSTTPPIEISSSRLTKLTRRTT. The residue at position 289 (serine 289) is a Phosphoserine. Over residues 292–309 the composition is skewed to low complexity; sequence ESPSSTTPPIEISSSRLT. At threonine 298 the chain carries Phosphothreonine. Serine 381 bears the Phosphoserine mark. The segment at 453–473 is disordered; it reads ECEDSDSETSSSQTSDDDAWK.

The protein belongs to the vasculin family.

The protein localises to the nucleus. In terms of biological role, possible transcription factor. This Mus musculus (Mouse) protein is Vasculin-like protein 1 (Gpbp1l1).